Consider the following 284-residue polypeptide: Tropomyosin (284 aa).

Residues 1 to 284 (MDAIKKKMQA…DQTFQELSGY (284 aa)) adopt a coiled-coil conformation. Residues 110 to 142 (TAKLEEATHTADESERVRKVMENRSFQDEERAN) are compositionally biased toward basic and acidic residues. Positions 110 to 143 (TAKLEEATHTADESERVRKVMENRSFQDEERANT) are disordered.

This sequence belongs to the tropomyosin family.

In terms of biological role, tropomyosin, in association with the troponin complex, plays a central role in the calcium dependent regulation of muscle contraction. The sequence is that of Tropomyosin from Anisakis simplex (Herring worm).